The sequence spans 158 residues: UPF0262 protein RHOS4_22360 (158 aa).

Belongs to the UPF0262 family.

This chain is UPF0262 protein RHOS4_22360, found in Cereibacter sphaeroides (strain ATCC 17023 / DSM 158 / JCM 6121 / CCUG 31486 / LMG 2827 / NBRC 12203 / NCIMB 8253 / ATH 2.4.1.) (Rhodobacter sphaeroides).